The sequence spans 274 residues: Pyrroline-5-carboxylate reductase 3 (274 aa).

At Ala-2 the chain carries N-acetylalanine.

It belongs to the pyrroline-5-carboxylate reductase family. In terms of assembly, homodecamer; composed of 5 homodimers.

The protein resides in the cytoplasm. It catalyses the reaction L-proline + NADP(+) = (S)-1-pyrroline-5-carboxylate + NADPH + 2 H(+). The catalysed reaction is L-proline + NAD(+) = (S)-1-pyrroline-5-carboxylate + NADH + 2 H(+). It participates in amino-acid biosynthesis; L-proline biosynthesis; L-proline from L-glutamate 5-semialdehyde: step 1/1. Functionally, oxidoreductase that catalyzes the last step in proline biosynthesis, which corresponds to the reduction of pyrroline-5-carboxylate (P5C) to L-proline using NAD(P)H. Proline is synthesized from either glutamate or ornithine; both are converted to P5C, and then to proline via pyrroline-5-carboxylate reductases (PYCRs). PYCR3 is exclusively linked to the biosynthesis of proline from ornithine. The chain is Pyrroline-5-carboxylate reductase 3 from Macaca fascicularis (Crab-eating macaque).